Consider the following 475-residue polypeptide: MESKALLLLALAVWLQSLTASRGGVAAADQRRDFIDIESKFALRTPEDTAEDTCHLIPGVAESVATCHFNHSSKTFMVIHGWTVTGMYESWVPKLVAALYKREPDSNVIVVDWLSRAQQHYPVSAGYTKLVGQDVARFINWMEEEFNYPLDNVHLLGYSLGAHAAGIAGSLTNKKVNRITGLDPAGPNFEYAEAPSRLSPDDADFVDVLHTFTRGSPGRSIGIQKPVGHVDIYPNGGTFQPGCNIGEAIRVIAERGLGDVDQLVKCSHERSIHLFIDSLLNEENPSKAYRCSSKEAFEKGLCLSCRKNRCNNLGYEINKVRAKRSSKMYLKTRSQMPYKVFHYQVKIHFSGTESETHTNQAFEISLYGTVAESENIPFTLPEVSTNKTYSFLIYTEVDIGELLMLKLKWKSDSYFSWSDWWSSPGFAIQKIRVKAGETQKKVIFCSREKVSHLQKGKAPAVFVKCHDKSLNKKSG.

The N-terminal stretch at 1–27 (MESKALLLLALAVWLQSLTASRGGVAA) is a signal peptide. The tract at residues 32–53 (RDFIDIESKFALRTPEDTAEDT) is interaction with GPIHBP1. Cysteine 54 and cysteine 67 form a disulfide bridge. N-linked (GlcNAc...) asparagine glycosylation is present at asparagine 70. Tyrosine 121 is subject to 3'-nitrotyrosine. Serine 159 acts as the Nucleophile in catalysis. The active-site Charge relay system is aspartate 183. The residue at position 191 (tyrosine 191) is a 3'-nitrotyrosine. Positions 194, 197, 199, and 202 each coordinate Ca(2+). A disulfide bridge links cysteine 243 with cysteine 266. An essential for determining substrate specificity region spans residues 243 to 266 (CNIGEAIRVIAERGLGDVDQLVKC). Catalysis depends on histidine 268, which acts as the Charge relay system. Cystine bridges form between cysteine 291-cysteine 310 and cysteine 302-cysteine 305. A PLAT domain is found at 341–464 (FHYQVKIHFS…KGKAPAVFVK (124 aa)). Tyrosine 343 carries the 3'-nitrotyrosine modification. An N-linked (GlcNAc...) asparagine glycan is attached at asparagine 386. An important for interaction with lipoprotein particles region spans residues 417–421 (WSDWW). The tract at residues 430–434 (KIRVK) is important for heparin binding. The tract at residues 443–467 (IFCSREKVSHLQKGKAPAVFVKCHD) is interaction with GPIHBP1. Cysteine 445 and cysteine 465 form a disulfide bridge.

This sequence belongs to the AB hydrolase superfamily. Lipase family. In terms of assembly, homodimer. Interacts with GPIHBP1 with 1:1 stoichiometry. Interacts with APOC2; the interaction activates LPL activity in the presence of lipids. Interaction with heparan sulfate proteoglycans is required to protect LPL against loss of activity. Associates with lipoprotein particles in blood plasma. Interacts with LMF1 and SEL1L; interaction with SEL1L is required to prevent aggregation of newly synthesized LPL in the endoplasmic reticulum (ER), and for normal export of LPL from the ER to the extracellular space. Interacts with SORL1; SORL1 acts as a sorting receptor, promoting LPL localization to endosomes and later to lysosomes, leading to degradation of newly synthesized LPL. In terms of processing, tyrosine nitration after lipopolysaccharide (LPS) challenge down-regulates the lipase activity. Highest levels in the spinal cord.

It localises to the cell membrane. It is found in the secreted. Its subcellular location is the extracellular space. The protein resides in the extracellular matrix. The enzyme catalyses a triacylglycerol + H2O = a diacylglycerol + a fatty acid + H(+). It carries out the reaction a 1,2-diacyl-sn-glycero-3-phosphocholine + H2O = a 2-acyl-sn-glycero-3-phosphocholine + a fatty acid + H(+). The catalysed reaction is 1,2,3-tri-(9Z-octadecenoyl)-glycerol + H2O = di-(9Z)-octadecenoylglycerol + (9Z)-octadecenoate + H(+). It catalyses the reaction 1,2-di-(9Z-octadecenoyl)-sn-glycero-3-phosphocholine + H2O = (9Z-octadecenoyl)-sn-glycero-3-phosphocholine + (9Z)-octadecenoate + H(+). The enzyme catalyses 1,2,3-tributanoylglycerol + H2O = dibutanoylglycerol + butanoate + H(+). It carries out the reaction 1,2-dihexadecanoyl-sn-glycero-3-phosphocholine + H2O = hexadecanoyl-sn-glycero-3-phosphocholine + hexadecanoate + H(+). The apolipoprotein APOC2 acts as a coactivator of LPL activity. Ca(2+) binding promotes protein stability and formation of the active homodimer. Interaction with GPIHBP1 protects LPL against inactivation by ANGPTL4. In terms of biological role, key enzyme in triglyceride metabolism. Catalyzes the hydrolysis of triglycerides from circulating chylomicrons and very low density lipoproteins (VLDL), and thereby plays an important role in lipid clearance from the blood stream, lipid utilization and storage. Although it has both phospholipase and triglyceride lipase activities it is primarily a triglyceride lipase with low but detectable phospholipase activity. Mediates margination of triglyceride-rich lipoprotein particles in capillaries. Recruited to its site of action on the luminal surface of vascular endothelium by binding to GPIHBP1 and cell surface heparan sulfate proteoglycans. This is Lipoprotein lipase (LPL) from Papio anubis (Olive baboon).